The following is a 503-amino-acid chain: Maturase K (503 aa).

The protein belongs to the intron maturase 2 family. MatK subfamily.

The protein localises to the plastid. It is found in the chloroplast. Its function is as follows. Usually encoded in the trnK tRNA gene intron. Probably assists in splicing its own and other chloroplast group II introns. In Rosa acicularis (Prickly rose), this protein is Maturase K.